The following is a 324-amino-acid chain: Beta-ketoacyl-[acyl-carrier-protein] synthase III (324 aa).

Catalysis depends on residues Cys-114 and His-251. An ACP-binding region spans residues 252-256; that stretch reads QANQR. The active site involves Asn-281.

Belongs to the thiolase-like superfamily. FabH family. In terms of assembly, homodimer.

Its subcellular location is the cytoplasm. The catalysed reaction is malonyl-[ACP] + acetyl-CoA + H(+) = 3-oxobutanoyl-[ACP] + CO2 + CoA. It functions in the pathway lipid metabolism; fatty acid biosynthesis. Catalyzes the condensation reaction of fatty acid synthesis by the addition to an acyl acceptor of two carbons from malonyl-ACP. Catalyzes the first condensation reaction which initiates fatty acid synthesis and may therefore play a role in governing the total rate of fatty acid production. Possesses both acetoacetyl-ACP synthase and acetyl transacylase activities. Its substrate specificity determines the biosynthesis of branched-chain and/or straight-chain of fatty acids. The protein is Beta-ketoacyl-[acyl-carrier-protein] synthase III of Rhodospirillum rubrum (strain ATCC 11170 / ATH 1.1.1 / DSM 467 / LMG 4362 / NCIMB 8255 / S1).